The chain runs to 31 residues: Cytochrome b6-f complex subunit 6 (31 aa).

Residues 4 to 24 form a helical membrane-spanning segment; it reads ITSYFGFLLAALTITSALFIG.

Belongs to the PetL family. The 4 large subunits of the cytochrome b6-f complex are cytochrome b6, subunit IV (17 kDa polypeptide, PetD), cytochrome f and the Rieske protein, while the 4 small subunits are PetG, PetL, PetM and PetN. The complex functions as a dimer.

It localises to the plastid. The protein resides in the chloroplast thylakoid membrane. In terms of biological role, component of the cytochrome b6-f complex, which mediates electron transfer between photosystem II (PSII) and photosystem I (PSI), cyclic electron flow around PSI, and state transitions. PetL is important for photoautotrophic growth as well as for electron transfer efficiency and stability of the cytochrome b6-f complex. This chain is Cytochrome b6-f complex subunit 6, found in Humulus lupulus (European hop).